The chain runs to 1311 residues: Kinase and exchange factor for Rac A (1311 aa).

One can recognise a Protein kinase domain in the interval Leu18–Ile316. ATP-binding positions include Ile24 to Val32 and Lys45. The active-site Proton acceptor is Asp138. Disordered regions lie at residues Asn169 to Gly201, Gln360 to Thr426, and Pro446 to Ser471. Over residues Gln451–Ser471 the composition is skewed to low complexity. Residues Glu650 to Leu679 form the IQ domain. One can recognise a DH domain in the interval Gln691–Gln927. 2 stretches are compositionally biased toward low complexity: residues Ser994–Asn1021 and Ser1031–Asn1044. Disordered regions lie at residues Ser994–Asn1044, Asn1114–Ile1145, and Gly1208–Asp1311. The segment covering Asn1117 to Gly1137 has biased composition (gly residues). Polar residues predominate over residues Gly1208–Leu1229. The segment covering Asn1230–Asn1245 has biased composition (low complexity). A compositionally biased stretch (polar residues) spans Thr1246–Ile1257. Positions Asn1263 to Asn1276 are enriched in low complexity. The segment covering Glu1277–Pro1287 has biased composition (polar residues). Residues Lys1290–Arg1303 show a composition bias toward basic residues.

This sequence belongs to the protein kinase superfamily. TKL Ser/Thr protein kinase family. Mg(2+) is required as a cofactor.

The enzyme catalyses L-seryl-[protein] + ATP = O-phospho-L-seryl-[protein] + ADP + H(+). It catalyses the reaction L-threonyl-[protein] + ATP = O-phospho-L-threonyl-[protein] + ADP + H(+). The chain is Kinase and exchange factor for Rac A (kxcA) from Dictyostelium discoideum (Social amoeba).